Consider the following 331-residue polypeptide: dTDP-glucose 4,6-dehydratase (331 aa).

NAD(+)-binding positions include 11–12 (FI), 33–36 (DALT), 57–58 (DI), 77–81 (FAAES), and T96. A substrate-binding site is contributed by S81. Residue T120 coordinates substrate. The active-site Proton donor is the D121. Active-site proton acceptor residues include E122 and Y147. Residue 147–151 (YSATK) coordinates NAD(+). N176 is a substrate binding site. NAD(+) is bound at residue N177. Substrate contacts are provided by residues 186–191 (KFIPRQ), 202–204 (KLY), R211, N246, and 269–273 (DRVGH).

It belongs to the NAD(P)-dependent epimerase/dehydratase family. dTDP-glucose dehydratase subfamily. In terms of assembly, homodimer. The cofactor is NAD(+).

The enzyme catalyses dTDP-alpha-D-glucose = dTDP-4-dehydro-6-deoxy-alpha-D-glucose + H2O. The protein operates within carbohydrate biosynthesis; dTDP-L-rhamnose biosynthesis. Functionally, catalyzes the dehydration of dTDP-D-glucose to form dTDP-6-deoxy-D-xylo-4-hexulose via a three-step process involving oxidation, dehydration and reduction. Involved in the biosynthesis of the dTDP-L-rhamnose which is a component of the critical linker, D-N-acetylglucosamine-L-rhamnose disaccharide, which connects the galactan region of arabinogalactan to peptidoglycan via a phosphodiester linkage. The sequence is that of dTDP-glucose 4,6-dehydratase (rmlB) from Mycobacterium tuberculosis (strain CDC 1551 / Oshkosh).